The primary structure comprises 300 residues: Lysenin-related protein 1 (300 aa).

The tract at residues 12 to 35 (EEIEVDVVSVWKEGYAYENRGNSS) is N-terminal cap domain. Residues 36 to 109 (VQQKITMTKG…SQVIEHTVTI (74 aa)) form a beta-hairpin domain region. Positions 110–158 (PPNKKFTRWKLNADVGGTGIEYMYLIDEVTAIGADLTIPEVNKSRAKIL) are N-terminal cap domain. The C-terminal receptor-binding domain stretch occupies residues 159–299 (VGRQIHLGET…EDKWILEVVN (141 aa)). An N-(acyl)-sphingosylphosphocholine-binding residues include Lys-187, Ser-229, Tyr-235, and Tyr-284. A disulfide bridge connects residues Cys-274 and Cys-285.

Belongs to the lysenin family. As to quaternary structure, binds to sphingomyelin as a monomer by using its C-terminal domain. Forms a nonamer when sphingomyelin/LRP-1 ratio is lower than ca 500. Oligomerization, but not binding, is influenced by the fluidity of sphingomyelin. As to expression, expressed by coelomocytes.

The protein resides in the secreted. It is found in the target cell membrane. In terms of biological role, pore-forming toxin that specifically binds sphingomyelin in the plasma membrane of various cells. Has hemolytic activity. Binding and hemolytic activities of this toxin are 10 times less than those of lysenin and lysenin-related protein 2. The chain is Lysenin-related protein 1 from Eisenia fetida (Red wiggler worm).